The following is a 122-amino-acid chain: Histone H2B, gonadal (122 aa).

Residues 1-31 (MPPKPSGKGQKKAGKAKGAPRTDKKRRRKRK) are disordered. Pro-2 is modified (n,N-dimethylproline). Ser-109 is a glycosylation site (O-linked (GlcNAc) serine). Lys-117 is covalently cross-linked (Glycyl lysine isopeptide (Lys-Gly) (interchain with G-Cter in ubiquitin)).

It belongs to the histone H2B family. As to quaternary structure, the nucleosome is a histone octamer containing two molecules each of H2A, H2B, H3 and H4 assembled in one H3-H4 heterotetramer and two H2A-H2B heterodimers. The octamer wraps approximately 147 bp of DNA. Post-translationally, monoubiquitination of Lys-117 gives a specific tag for epigenetic transcriptional activation and is also prerequisite for histone H3 'Lys-4' and 'Lys-79' methylation. GlcNAcylation at Ser-109 promotes monoubiquitination of Lys-117. It fluctuates in response to extracellular glucose, and associates with transcribed genes.

The protein localises to the nucleus. It is found in the chromosome. Core component of nucleosome. Nucleosomes wrap and compact DNA into chromatin, limiting DNA accessibility to the cellular machineries which require DNA as a template. Histones thereby play a central role in transcription regulation, DNA repair, DNA replication and chromosomal stability. DNA accessibility is regulated via a complex set of post-translational modifications of histones, also called histone code, and nucleosome remodeling. The protein is Histone H2B, gonadal of Asterias rubens (Common European starfish).